The chain runs to 380 residues: uncharacterized protein (380 aa).

The protein belongs to the metallo-dependent hydrolases superfamily.

This is an uncharacterized protein from Methanocaldococcus jannaschii (strain ATCC 43067 / DSM 2661 / JAL-1 / JCM 10045 / NBRC 100440) (Methanococcus jannaschii).